A 462-amino-acid chain; its full sequence is UDP-N-acetylmuramate--L-alanine ligase (462 aa).

119–125 (GTHGKTT) is a binding site for ATP.

This sequence belongs to the MurCDEF family.

It is found in the cytoplasm. It catalyses the reaction UDP-N-acetyl-alpha-D-muramate + L-alanine + ATP = UDP-N-acetyl-alpha-D-muramoyl-L-alanine + ADP + phosphate + H(+). The protein operates within cell wall biogenesis; peptidoglycan biosynthesis. In terms of biological role, cell wall formation. This is UDP-N-acetylmuramate--L-alanine ligase from Parabacteroides distasonis (strain ATCC 8503 / DSM 20701 / CIP 104284 / JCM 5825 / NCTC 11152).